The chain runs to 501 residues: ATP synthase subunit alpha (501 aa).

Residue 169–176 participates in ATP binding; sequence GDRQTGKT.

The protein belongs to the ATPase alpha/beta chains family. In terms of assembly, F-type ATPases have 2 components, CF(1) - the catalytic core - and CF(0) - the membrane proton channel. CF(1) has five subunits: alpha(3), beta(3), gamma(1), delta(1), epsilon(1). CF(0) has three main subunits: a(1), b(2) and c(9-12). The alpha and beta chains form an alternating ring which encloses part of the gamma chain. CF(1) is attached to CF(0) by a central stalk formed by the gamma and epsilon chains, while a peripheral stalk is formed by the delta and b chains.

Its subcellular location is the cell membrane. It catalyses the reaction ATP + H2O + 4 H(+)(in) = ADP + phosphate + 5 H(+)(out). Functionally, produces ATP from ADP in the presence of a proton gradient across the membrane. The alpha chain is a regulatory subunit. This chain is ATP synthase subunit alpha, found in Desulforamulus reducens (strain ATCC BAA-1160 / DSM 100696 / MI-1) (Desulfotomaculum reducens).